The following is a 394-amino-acid chain: Outer membrane protein S1 (394 aa).

The N-terminal stretch at 1–21 (MNRKVLALLVPALLVAGAANA) is a signal peptide. A disordered region spans residues 222–242 (SSSDRSDNQVARGYGDGMNER).

This sequence belongs to the Gram-negative porin family. Homotrimer.

Its subcellular location is the cell outer membrane. In terms of biological role, forms pores that allow passive diffusion of small molecules across the outer membrane. In Salmonella typhi, this protein is Outer membrane protein S1 (ompS1).